Here is a 260-residue protein sequence, read N- to C-terminus: Proteasome subunit alpha (260 aa).

The segment at 231-260 is disordered; the sequence is LLPEDFSPGQTEGGGDPAPESGDSKDAKDN.

It belongs to the peptidase T1A family. The 20S proteasome core is composed of 14 alpha and 14 beta subunits that assemble into four stacked heptameric rings, resulting in a barrel-shaped structure. The two inner rings, each composed of seven catalytic beta subunits, are sandwiched by two outer rings, each composed of seven alpha subunits. The catalytic chamber with the active sites is on the inside of the barrel. Has a gated structure, the ends of the cylinder being occluded by the N-termini of the alpha-subunits. Is capped by the proteasome-associated ATPase, ARC.

It is found in the cytoplasm. Its pathway is protein degradation; proteasomal Pup-dependent pathway. Its activity is regulated as follows. The formation of the proteasomal ATPase ARC-20S proteasome complex, likely via the docking of the C-termini of ARC into the intersubunit pockets in the alpha-rings, may trigger opening of the gate for substrate entry. Interconversion between the open-gate and close-gate conformations leads to a dynamic regulation of the 20S proteasome proteolysis activity. Functionally, component of the proteasome core, a large protease complex with broad specificity involved in protein degradation. The sequence is that of Proteasome subunit alpha from Mycobacteroides abscessus (strain ATCC 19977 / DSM 44196 / CCUG 20993 / CIP 104536 / JCM 13569 / NCTC 13031 / TMC 1543 / L948) (Mycobacterium abscessus).